The following is a 347-amino-acid chain: MLVSWDHPKMLPRLLGFLALSLLACGNPTIVSRKEWGASSLTCRVPLSLPVPYLIIEQVTRMQCQDQITCSQVVRVLQSQYVHNKGWCDIAFNFLVGDDGKVYEGVGWYVQGLHTQGYNNVSLGIAFFGSKIGSPSPAALSATEDLIFFAIQNGYLSPKYIQPFLLKEETCLVPQHSEIPKKACPNITPRSAWEARETHCPQMNLPAKFVIIIHTAGKSCNESADCLVRVRDTQSFHIDNQDFCDIAYHFLVGQDGEVYEGVGWNIEGSHTYGYNDIALGIAFMGNFVEKPPNEASLKAAQSLIQCAVAKGYLTSNYLLMGHSDVSNILSPGQALYNIIKTWPHFKH.

The first 26 residues, 1–26 (MLVSWDHPKMLPRLLGFLALSLLACG), serve as a signal peptide directing secretion. N-acetylmuramoyl-L-alanine amidase domains lie at 77 to 185 (LQSQ…KACP) and 206 to 328 (PAKF…VSNI). The N-linked (GlcNAc...) asparagine glycan is linked to N120. Intrachain disulfides connect C184–C306, C200–C244, and C220–C226. 2 residues coordinate peptidoglycan: H237 and Y248. Residues 270-275 (HTYGYN) form an interaction with murein region.

It belongs to the N-acetylmuramoyl-L-alanine amidase 2 family. Monomer. Homodimer; disulfide-linked. Heterodimer with PGLYRP4; disulfide-linked. Detected in lung, spleen and stomach, and at low levels in eye, heart, thymus and testis.

The protein resides in the secreted. Pattern receptor that binds to murein peptidoglycans (PGN) of Gram-positive bacteria. Has bactericidal activity towards Gram-positive bacteria. May kill Gram-positive bacteria by interfering with peptidoglycan biosynthesis. Also binds to Gram-negative bacteria, and has bacteriostatic activity towards Gram-negative bacteria. Plays a role in innate immunity. The polypeptide is Peptidoglycan recognition protein 3 (Pglyrp3) (Mus musculus (Mouse)).